The sequence spans 222 residues: Eukaryotic translation initiation factor 3 subunit K (222 aa).

Residues 46–208 (YDLEANLAVL…KIKTKNITEK (163 aa)) form the PCI domain.

The protein belongs to the eIF-3 subunit K family. In terms of assembly, component of the eukaryotic translation initiation factor 3 (eIF-3) complex. The eIF-3 complex interacts with pix.

The protein resides in the cytoplasm. Functionally, component of the eukaryotic translation initiation factor 3 (eIF-3) complex, which is involved in protein synthesis of a specialized repertoire of mRNAs and, together with other initiation factors, stimulates binding of mRNA and methionyl-tRNAi to the 40S ribosome. The eIF-3 complex specifically targets and initiates translation of a subset of mRNAs involved in cell proliferation. This Drosophila grimshawi (Hawaiian fruit fly) protein is Eukaryotic translation initiation factor 3 subunit K.